Here is a 113-residue protein sequence, read N- to C-terminus: Hydrogenase maturation factor HypA (113 aa).

His2 provides a ligand contact to Ni(2+). Zn(2+) is bound by residues Cys70, Cys73, Cys86, and Cys88.

Belongs to the HypA/HybF family.

In terms of biological role, involved in the maturation of [NiFe] hydrogenases. Required for nickel insertion into the metal center of the hydrogenase. In Nostoc punctiforme (strain ATCC 29133 / PCC 73102), this protein is Hydrogenase maturation factor HypA.